The following is a 112-amino-acid chain: Putative pterin-4-alpha-carbinolamine dehydratase (112 aa).

This sequence belongs to the pterin-4-alpha-carbinolamine dehydratase family.

The catalysed reaction is (4aS,6R)-4a-hydroxy-L-erythro-5,6,7,8-tetrahydrobiopterin = (6R)-L-erythro-6,7-dihydrobiopterin + H2O. This is Putative pterin-4-alpha-carbinolamine dehydratase from Shewanella amazonensis (strain ATCC BAA-1098 / SB2B).